The chain runs to 746 residues: Mediator of RNA polymerase II transcription subunit 25 (746 aa).

The interaction with the Mediator complex stretch occupies residues 1 to 226 (MVPGSEGPAR…PRHMVLVRGL (226 aa)). 2 disordered regions span residues 233–273 (GSAP…QQYQ) and 298–390 (GLGP…PALG). The span at 238–251 (PLQPKQPVPLPPAA) shows a compositional bias: pro residues. A compositionally biased stretch (low complexity) spans 252–262 (PAGATLSTAPQ). Over residues 329 to 342 (PPGPPGAPKPPPAS) the composition is skewed to pro residues. A compositionally biased stretch (low complexity) spans 343–354 (QPSLVSTVAPGP). The interval 389-543 (LGGQQSVSNK…VNGIRQVITN (155 aa)) is interaction with VP16. An interaction with CREBBP region spans residues 395–545 (VSNKLLAWSG…GIRQVITNHK (151 aa)). The tract at residues 548–746 (QQQKLEQQRG…MEDDILMDLI (199 aa)) is disordered. Interaction with RARA regions lie at residues 563-652 (APPG…LLNP) and 639-706 (PGAN…WPAQ). Positions 599–610 (AAAGQPQPQGAA) are enriched in low complexity. A compositionally biased stretch (pro residues) spans 611–633 (PAPPGAPQGPPGAAPGPPPPGPL). Positions 645 to 649 (LRSLL) match the LXXLL motif motif. Composition is skewed to pro residues over residues 651–663 (NPPP…PPPQ), 672–682 (PGAPALLPPPH), and 690–701 (LGPPLLHPPPAQ). Arginine 724 carries the asymmetric dimethylarginine modification. Over residues 737–746 (MEDDILMDLI) the composition is skewed to acidic residues.

The protein belongs to the Mediator complex subunit 25 family. In terms of assembly, component of the Mediator complex, which is composed of MED1, MED4, MED6, MED7, MED8, MED9, MED10, MED11, MED12, MED13, MED13L, MED14, MED15, MED16, MED17, MED18, MED19, MED20, MED21, MED22, MED23, MED24, MED25, MED26, MED27, MED29, MED30, MED31, CCNC, CDK8 and CDC2L6/CDK11. The MED12, MED13, CCNC and CDK8 subunits form a distinct module termed the CDK8 module. Mediator containing the CDK8 module is less active than Mediator lacking this module in supporting transcriptional activation. Individual preparations of the Mediator complex lacking one or more distinct subunits have been variously termed ARC, CRSP, DRIP, PC2, SMCC and TRAP. Interacts with CREBBP. Interacts with ESR1, GR, RARA, RXRA and THRB in a ligand-dependent fashion. Binds the Herpes simplex virus activator VP16.

It is found in the nucleus. In terms of biological role, component of the Mediator complex, a coactivator involved in the regulated transcription of nearly all RNA polymerase II-dependent genes. Mediator functions as a bridge to convey information from gene-specific regulatory proteins to the basal RNA polymerase II transcription machinery. Mediator is recruited to promoters by direct interactions with regulatory proteins and serves as a scaffold for the assembly of a functional preinitiation complex with RNA polymerase II and the general transcription factors. Required for RARA/RXRA-mediated transcription. The sequence is that of Mediator of RNA polymerase II transcription subunit 25 (MED25) from Bos taurus (Bovine).